Consider the following 172-residue polypeptide: Nicotinamide-nucleotide adenylyltransferase (172 aa).

It belongs to the archaeal NMN adenylyltransferase family.

The protein resides in the cytoplasm. It catalyses the reaction beta-nicotinamide D-ribonucleotide + ATP + H(+) = diphosphate + NAD(+). The protein operates within cofactor biosynthesis; NAD(+) biosynthesis; NAD(+) from nicotinamide D-ribonucleotide: step 1/1. In Saccharolobus solfataricus (strain ATCC 35092 / DSM 1617 / JCM 11322 / P2) (Sulfolobus solfataricus), this protein is Nicotinamide-nucleotide adenylyltransferase.